Here is a 387-residue protein sequence, read N- to C-terminus: Protein RecA (387 aa).

Position 80–87 (80–87) interacts with ATP; that stretch reads GPESSGKT. Residues 348–387 form a disordered region; that stretch reads LDDSEVAETEEETTASKTKAKAKKEEKAVETEEIELELED. Composition is skewed to acidic residues over residues 349-360 and 378-387; these read DDSEVAETEEET and TEEIELELED.

This sequence belongs to the RecA family.

Its subcellular location is the cytoplasm. In terms of biological role, can catalyze the hydrolysis of ATP in the presence of single-stranded DNA, the ATP-dependent uptake of single-stranded DNA by duplex DNA, and the ATP-dependent hybridization of homologous single-stranded DNAs. It interacts with LexA causing its activation and leading to its autocatalytic cleavage. The chain is Protein RecA from Lactococcus lactis subsp. cremoris (strain MG1363).